A 282-amino-acid chain; its full sequence is Small ribosomal subunit protein uS3 (282 aa).

The KH type-2 domain maps to 43 to 111 (IRRLMSKGME…QVQLNILEVK (69 aa)). Residues 217–282 (AQSQAAAPRA…IGKGSNGTEA (66 aa)) are disordered. Positions 228 to 240 (RRNERGDRPDRGA) are enriched in basic and acidic residues. Residues 256 to 269 (AVATGSAPTGTAAT) are compositionally biased toward low complexity.

Belongs to the universal ribosomal protein uS3 family. Part of the 30S ribosomal subunit. Forms a tight complex with proteins S10 and S14.

Binds the lower part of the 30S subunit head. Binds mRNA in the 70S ribosome, positioning it for translation. The sequence is that of Small ribosomal subunit protein uS3 from Kineococcus radiotolerans (strain ATCC BAA-149 / DSM 14245 / SRS30216).